Here is a 493-residue protein sequence, read N- to C-terminus: MEHQLTIYNTLDRKKELFVPLHAPHVGMYVCGPTVYGDAHLGHARPAITFDVLFRYLTHLGYKVRYVRNITDVGHLEHDADEGEDKIAKKARLEELEPMEVVQYYLNRYHKAMEALNVLSPSIEPHASGHIIEQIQLVQKILDAGYAYESEGSVYFDVAKYNKDYHYGKLSGRNLDDVLNTTRDLDGQSEKRNPADFALWKKAQPEHIMRWPSPWSDGFPGWHAECTAMGRKYLGEHFDIHGGGMDLIFPHHECEIAQSVASQGDDMVHYWMHNNMITINGTKMGKSLGNFITLDEFFNGTHKLLAQAYTPMTIRFFILQAHYRSTVDFSNEALQASEKGLQRLIEAIEGLDKITPAATTSEGINVKELRAKCYEAMNDDLNTPIVIAQLFEGARIINNINAGNATISAEDLKDLKETFHLFCFDIMGLKEEKGSSDGREAAYGKVVDMLLEQRMKAKANKDWATSDEIRNTLTALGFEVKDTKDGFEWRLNK.

Cys31 serves as a coordination point for Zn(2+). The 'HIGH' region signature appears at 33 to 43 (PTVYGDAHLGH). Zn(2+) is bound by residues Cys226, His251, and Glu255. A 'KMSKS' region motif is present at residues 283-287 (KMGKS). Lys286 provides a ligand contact to ATP.

Belongs to the class-I aminoacyl-tRNA synthetase family. Monomer. Zn(2+) serves as cofactor.

It localises to the cytoplasm. It catalyses the reaction tRNA(Cys) + L-cysteine + ATP = L-cysteinyl-tRNA(Cys) + AMP + diphosphate. This chain is Cysteine--tRNA ligase, found in Bacteroides thetaiotaomicron (strain ATCC 29148 / DSM 2079 / JCM 5827 / CCUG 10774 / NCTC 10582 / VPI-5482 / E50).